The primary structure comprises 200 residues: 3-isopropylmalate dehydratase small subunit (200 aa).

It belongs to the LeuD family. LeuD type 1 subfamily. Heterodimer of LeuC and LeuD.

The catalysed reaction is (2R,3S)-3-isopropylmalate = (2S)-2-isopropylmalate. It participates in amino-acid biosynthesis; L-leucine biosynthesis; L-leucine from 3-methyl-2-oxobutanoate: step 2/4. In terms of biological role, catalyzes the isomerization between 2-isopropylmalate and 3-isopropylmalate, via the formation of 2-isopropylmaleate. The polypeptide is 3-isopropylmalate dehydratase small subunit (Actinobacillus succinogenes (strain ATCC 55618 / DSM 22257 / CCUG 43843 / 130Z)).